The sequence spans 217 residues: Small ribosomal subunit protein uS3 (217 aa).

The region spanning 38–106 (IRNFIKKELA…QVHINIIEIK (69 aa)) is the KH type-2 domain.

The protein belongs to the universal ribosomal protein uS3 family. In terms of assembly, part of the 30S ribosomal subunit. Forms a tight complex with proteins S10 and S14.

Functionally, binds the lower part of the 30S subunit head. Binds mRNA in the 70S ribosome, positioning it for translation. This is Small ribosomal subunit protein uS3 from Streptococcus suis (strain 98HAH33).